The following is a 227-amino-acid chain: Class I hydrophobin 4 (227 aa).

Positions 1–18 (MQFTTFALLAVAAATASA) are cleaved as a signal peptide. 4 disulfide bridges follow: C159-C207, C167-C200, C168-C186, and C208-C222. 2 N-linked (GlcNAc...) asparagine glycosylation sites follow: N190 and N219.

It belongs to the fungal hydrophobin family. In terms of assembly, self-assembles to form functional amyloid fibrils called rodlets. Self-assembly into fibrillar rodlets occurs spontaneously at hydrophobic:hydrophilic interfaces and the rodlets further associate laterally to form amphipathic monolayers. In terms of tissue distribution, expressed in conidia and aerial hyphae.

It is found in the secreted. The protein localises to the cell wall. Its function is as follows. Aerial growth, conidiation, and dispersal of filamentous fungi in the environment rely upon a capability of their secreting small amphipathic proteins called hydrophobins (HPBs) with low sequence identity. Class I can self-assemble into an outermost layer of rodlet bundles on aerial cell surfaces, conferring cellular hydrophobicity that supports fungal growth, development and dispersal; whereas Class II form highly ordered films at water-air interfaces through intermolecular interactions but contribute nothing to the rodlet structure. Hcf-4 is a class I hydrophobin that is involved in the development and germination of conidia. This chain is Class I hydrophobin 4, found in Passalora fulva (Tomato leaf mold).